The chain runs to 320 residues: Zinc finger protein 330 (320 aa).

The segment at 1 to 23 (MPKKKTGARKKAENRREREKQLR) is disordered. Residues 3–11 (KKKTGARKK) carry the Nuclear localization signal motif. A compositionally biased stretch (basic and acidic residues) spans 10 to 22 (KKAENRREREKQL). 4 C4-type zinc fingers span residues 42–58 (CDKC…CYFC), 67–104 (CAQC…CDFC), 129–149 (CVEC…CSFC), and 175–189 (CVSC…CLRC). Disordered regions lie at residues 206 to 250 (EKGK…ASGY) and 264 to 303 (GASY…TNLN). The segment covering 216-225 (CGHETQETKD) has biased composition (basic and acidic residues). Over residues 269 to 287 (DEEEDEYEAEDDEEEEDEG) the composition is skewed to acidic residues. Ser-291 carries the post-translational modification Phosphoserine.

The protein belongs to the NOA36 family.

It localises to the nucleus. Its subcellular location is the nucleolus. The protein localises to the chromosome. It is found in the centromere. The polypeptide is Zinc finger protein 330 (ZNF330) (Bos taurus (Bovine)).